Here is an 807-residue protein sequence, read N- to C-terminus: Ribosome-releasing factor 2, mitochondrial (807 aa).

Residues 1 to 18 constitute a mitochondrion transit peptide; that stretch reads MFCRKYAFQTWKQFSRFY. The region spanning 27–315 is the tr-type G domain; sequence SKTRNIGIIA…GITKYLPSPL (289 aa). Residues 36 to 43, 100 to 104, and 154 to 157 contribute to the GTP site; these read AHIDAGKT, DTPGH, and NKMD.

It belongs to the TRAFAC class translation factor GTPase superfamily. Classic translation factor GTPase family. EF-G/EF-2 subfamily.

It localises to the mitochondrion. Its function is as follows. Mitochondrial GTPase that mediates the disassembly of ribosomes from messenger RNA at the termination of mitochondrial protein biosynthesis. Not involved in the GTP-dependent ribosomal translocation step during translation elongation. In Candida dubliniensis (strain CD36 / ATCC MYA-646 / CBS 7987 / NCPF 3949 / NRRL Y-17841) (Yeast), this protein is Ribosome-releasing factor 2, mitochondrial.